The primary structure comprises 1674 residues: Kinesin-like protein KIF21A (1674 aa).

At Met1 the chain carries N-acetylmethionine. The region spanning 9–371 is the Kinesin motor domain; the sequence is SVRVAVRIRP…LKYANRARNI (363 aa). ATP is bound at residue 88-95; that stretch reads GQTGAGKT. Positions 365–575 form a coiled coil; the sequence is ANRARNIKNK…NREERSVAGK (211 aa). At Ser524 the chain carries Phosphoserine. Disordered regions lie at residues 556–641, 779–804, and 841–881; these read KKRL…DEKA, EEQEKARLTESRRNREIAQLKKDQRK, and SDKV…AQQK. The span at 560–597 shows a compositional bias: basic and acidic residues; that stretch reads QKLEESNREERSVAGKEDNTDTDQEKKEEKGVSERENN. Residues 598 to 637 show a composition bias toward acidic residues; the sequence is ELEVEESQEVSDHEDEEEEEEEEEDDIDGGESSDESDSES. The span at 851 to 865 shows a compositional bias: polar residues; that stretch reads KLSSSDAPAQDTGSS. Coiled-coil stretches lie at residues 931–1019 and 1053–1083; these read TDII…AKEE and LQAAQKEAQIKVLEGRLKQTEITSATQNQLL. The disordered stretch occupies residues 1116–1138; the sequence is VEDSTDEDAPLNSPGSEGSTLSS. Residues 1128 to 1138 are compositionally biased toward polar residues; it reads SPGSEGSTLSS. Residues 1146–1167 form an interaction with KANK1 and KANK2 region; that stretch reads EVKPKNKARRRTTTQMELLYAD. Composition is skewed to polar residues over residues 1170–1179 and 1196–1205; these read ELASDTSTGD and GMNTETSGTS. Positions 1170–1318 are disordered; that stretch reads ELASDTSTGD…SSLSEVHRSS (149 aa). Phosphoserine occurs at positions 1212, 1225, 1229, and 1239. Positions 1245–1262 are enriched in basic and acidic residues; it reads KAYEKAEKSKAKEQKHSD. Over residues 1288 to 1297 the composition is skewed to polar residues; the sequence is NRLTVSQGNT. WD repeat units follow at residues 1345–1382, 1385–1423, 1449–1487, 1490–1532, 1541–1578, 1582–1621, and 1624–1661; these read GHTKAVLCVDSTDDLLFTGSKDRTCKVWNLVTGQEIMS, GHPNNVVSVKYCNYTSLVFTVSTSYIKVWDIRDSAKCIR, SGENQINQIALNPTGTFLYAASGNAVRMWDLKRFQSTGK, GHLG…LGTV, PHYDGIEALTIQGDNLFSGSRDNGIKKWDLTQKDLLQQ, AHKDWVCALGVVPDHPVLLSGCRGGILKVWNMDTFMPVGE, and GHDSPINAICVNSTHIFTAADDRTVRIWKARNLQDGQI. Ser1662 bears the Phosphoserine mark. Phosphothreonine is present on Thr1664. A Phosphoserine modification is found at Ser1673.

The protein belongs to the TRAFAC class myosin-kinesin ATPase superfamily. Kinesin family. In terms of assembly, part of a cortical microtubule stabilization complex (CMSC) composed of KANK1, PPFIA1, PPFIBP1, ERC1/ELKS, PHLDB2/LL5beta, CLASPs, KIF21A and possibly additional interactors; within CMSCs KANK1 and PHLDB2/LL5beta seem to be the core components for recruiting microtubule-binding proteins KIF21A and CLASPs, whereas PPFIA1, PPFIBP1 and ERC1/ELKS serve as scaffolds for protein clustering. Interacts (via residues 1146-1167) with KANK1 (via ankyrin repeats 1-5) and KANK2 (via ankyrin repeats 1-5).

It is found in the cytoplasm. Its subcellular location is the cytoskeleton. It localises to the cell cortex. The protein resides in the cell projection. The protein localises to the axon. It is found in the dendrite. Its subcellular location is the growth cone. Functionally, processive microtubule plus-end directed motor protein involved in neuronal axon guidance. Is recruited by KANK1 to cortical microtubule stabilizing complexes (CMSCs) at focal adhesions (FAs) rims where it promotes microtubule capture and stability. Controls microtubule polymerization rate at axonal growth cones and suppresses microtubule growth without inducing microtubule disassembly once it reaches the cell cortex. This chain is Kinesin-like protein KIF21A (KIF21A), found in Homo sapiens (Human).